A 187-amino-acid chain; its full sequence is Signal peptidase complex catalytic subunit SEC11 (187 aa).

Over 1 to 18 the chain is Cytoplasmic; it reads MLSSLSPYMANPRNTLSQ. A helical; Signal-anchor for type II membrane protein transmembrane segment spans residues 19–39; the sequence is VLNFGLVLSSAFMVWKALSVI. The Lumenal segment spans residues 40–187; that stretch reads TNSASPVVVV…MGLMVMLQRE (148 aa). Catalysis depends on charge relay system residues serine 53 and histidine 92. Asparagine 125 is a glycosylation site (N-linked (GlcNAc...) asparagine). Aspartate 129 functions as the Charge relay system in the catalytic mechanism. The segment at 173–184 is C-terminal short (CTS) helix; sequence VLLGFMGLMVML.

It belongs to the peptidase S26B family. Component of the signal peptidase complex (SPC) composed of a catalytic subunit SEC11 and three accessory subunits SPC1, SPC2 and SPC3. The complex induces a local thinning of the ER membrane which is used to measure the length of the signal peptide (SP) h-region of protein substrates. This ensures the selectivity of the complex towards h-regions shorter than 18-20 amino acids. SPC associates with the translocon complex.

It is found in the endoplasmic reticulum membrane. It catalyses the reaction Cleavage of hydrophobic, N-terminal signal or leader sequences from secreted and periplasmic proteins.. Its function is as follows. Catalytic component of the signal peptidase complex (SPC) which catalyzes the cleavage of N-terminal signal sequences from nascent proteins as they are translocated into the lumen of the endoplasmic reticulum. Specifically cleaves N-terminal signal peptides that contain a hydrophobic alpha-helix (h-region) shorter than 18-20 amino acids. This Ajellomyces capsulatus (strain G186AR / H82 / ATCC MYA-2454 / RMSCC 2432) (Darling's disease fungus) protein is Signal peptidase complex catalytic subunit SEC11 (SEC11).